The following is a 510-amino-acid chain: UDP-galactopyranose mutase (510 aa).

FAD contacts are provided by threonine 18, aspartate 38, leucine 46, and glycine 61. UDP-alpha-D-galactose is bound by residues glycine 61 and glycine 62. Histidine 63 contacts FAD. NADH is bound by residues histidine 68, arginine 91, and serine 93. Positions 68, 91, 93, and 104 each coordinate NADPH. UDP-alpha-D-galactose-binding residues include tyrosine 104, glutamine 107, methionine 159, tyrosine 162, asparagine 163, tryptophan 167, and arginine 182. Asparagine 203 is an NADPH binding site. Asparagine 207 lines the UDP-alpha-D-galactose pocket. Valine 242 contributes to the FAD binding site. Tryptophan 315 and tyrosine 317 together coordinate NADPH. Positions 317, 327, and 419 each coordinate UDP-alpha-D-galactose. Arginine 327 contacts FAD. Residues tyrosine 419 and arginine 447 each coordinate NADH. NADPH is bound by residues tyrosine 419 and arginine 447. Position 447 (arginine 447) interacts with FAD. Tyrosine 453 lines the UDP-alpha-D-galactose pocket. Residues glycine 456, asparagine 457, and glutamine 458 each coordinate FAD. Asparagine 457 contributes to the UDP-alpha-D-galactose binding site. Asparagine 457 is an NADH binding site. Asparagine 457 serves as a coordination point for NADPH. NADPH is bound at residue histidine 460. Serine 461 is an FAD binding site.

It belongs to the UDP-galactopyranose/dTDP-fucopyranose mutase family. In terms of assembly, homotetramer. FAD is required as a cofactor.

The catalysed reaction is UDP-alpha-D-galactose = UDP-alpha-D-galactofuranose. In terms of biological role, UDP-galactopyranose mutase, key flavoenzyme of galactofuranose metabolism that catalyzes the 6-to-5 ring contraction of UDP-galactopyranose to UDP-galactofuranose, the donor used by various galacto-furanosyltransferases. Controls the biosynthesis of galactomannan and galactofuranose containing glycoconjugates. The flavin functions as nucleophile, forming a flavin-sugar adduct that facilitates galactose-ring opening and contraction. The binding of UDP-galactopyranose induces profound conformational changes in the enzyme and two loops on opposite sides of the active site move toward each other by over 10 Angstroms to cover the substrate and create a closed active site. The protein is UDP-galactopyranose mutase of Aspergillus fumigatus (Neosartorya fumigata).